The sequence spans 1191 residues: Major DNA-binding protein (1191 aa).

The tract at residues 288–307 (ETTKGQSKMGKREGSDVSGG) is disordered. Residues 498-511 (CELCDKTSRIYCAH) fold into a zinc finger. The Required for filament formation signature appears at 841–842 (FW). Positions 1166-1191 (KRPNMNVFDLEPIPEKRVPVLSVDML) are required for nuclear localization.

The protein belongs to the herpesviridae major DNA-binding protein family. Homooligomers. Forms double-helical filaments necessary for the formation of replication compartments within the host nucleus. Interacts with the origin-binding protein. Interacts with the helicase primase complex; this interaction stimulates primer synthesis activity of the helicase-primase complex. Interacts with the DNA polymerase. Interacts with the alkaline exonuclease; this interaction increases its nuclease processivity.

It localises to the host nucleus. Its function is as follows. Plays several crucial roles in viral infection. Participates in the opening of the viral DNA origin to initiate replication by interacting with the origin-binding protein. May disrupt loops, hairpins and other secondary structures present on ssDNA to reduce and eliminate pausing of viral DNA polymerase at specific sites during elongation. Promotes viral DNA recombination by performing strand-transfer, characterized by the ability to transfer a DNA strand from a linear duplex to a complementary single-stranded DNA circle. Can also catalyze the renaturation of complementary single strands. Additionally, reorganizes the host cell nucleus, leading to the formation of prereplicative sites and replication compartments. This process is driven by the protein which can form double-helical filaments in the absence of DNA. The chain is Major DNA-binding protein from Gallid herpesvirus 2 (strain Chicken/Md5/ATCC VR-987) (GaHV-2).